The sequence spans 475 residues: MSPQTETKASVGFKAGVKDYKLTYHTPDYETKDTDILAAFRVTPQPGVPPEEAGAAVAAESSTGTWTTVWTDGLTSLDRYKGRCYHIEPVAGEESQFIAYVAYPLDLFEEGSVTNMFTSIVGNVFGFKALRALRLEDLRIPPAYSKTFQGPPHGIQVERDKLNKYGRPLLGCTIKPKLGLSAKNYGRAVYECLRGGLDFTKDDENVNSQPFMRWRDRFLFCAEAIYKAQAETGEIKGHYLNATAGTCEEMMKRAVFARELGVPIVMHDYLTGGFTANTSLAHYCRDNGLLLHIHRAMHAVIDRQKNHGIHFRVLAKALRMSGGDHIHAGTVVGKLEGEREITLGFVDLLRDDYIEKDRSRGIYFTQDWVSLPGVLPVASGGIHVWHMPALTEIFGDDSVLQFGGGTLGHPWGNAPGAVANRVALEACVQARNEGRDLAREGNEIIREAAKWSPELAAACEVWKEIKFEFPAMDTL.

Positions 1-2 (MS) are excised as a propeptide. Pro-3 is subject to N-acetylproline. The residue at position 14 (Lys-14) is an N6,N6,N6-trimethyllysine. Substrate-binding residues include Asn-123 and Thr-173. Catalysis depends on Lys-175, which acts as the Proton acceptor. Substrate is bound at residue Lys-177. 3 residues coordinate Mg(2+): Lys-201, Asp-203, and Glu-204. Lys-201 is subject to N6-carboxylysine. The active-site Proton acceptor is the His-294. The substrate site is built by Arg-295, His-327, and Ser-379.

Belongs to the RuBisCO large chain family. Type I subfamily. As to quaternary structure, heterohexadecamer of 8 large chains and 8 small chains; disulfide-linked. The disulfide link is formed within the large subunit homodimers. The cofactor is Mg(2+). In terms of processing, the disulfide bond which can form in the large chain dimeric partners within the hexadecamer appears to be associated with oxidative stress and protein turnover.

Its subcellular location is the plastid. It localises to the chloroplast. The enzyme catalyses 2 (2R)-3-phosphoglycerate + 2 H(+) = D-ribulose 1,5-bisphosphate + CO2 + H2O. The catalysed reaction is D-ribulose 1,5-bisphosphate + O2 = 2-phosphoglycolate + (2R)-3-phosphoglycerate + 2 H(+). Its function is as follows. RuBisCO catalyzes two reactions: the carboxylation of D-ribulose 1,5-bisphosphate, the primary event in carbon dioxide fixation, as well as the oxidative fragmentation of the pentose substrate in the photorespiration process. Both reactions occur simultaneously and in competition at the same active site. In Alnus incana (White alder), this protein is Ribulose bisphosphate carboxylase large chain.